The following is a 413-amino-acid chain: Phosphopentomutase (413 aa).

Asp11, Asp306, His311, Asp347, His348, and His359 together coordinate Mn(2+).

This sequence belongs to the phosphopentomutase family. Mn(2+) is required as a cofactor.

It localises to the cytoplasm. It catalyses the reaction 2-deoxy-alpha-D-ribose 1-phosphate = 2-deoxy-D-ribose 5-phosphate. The enzyme catalyses alpha-D-ribose 1-phosphate = D-ribose 5-phosphate. It functions in the pathway carbohydrate degradation; 2-deoxy-D-ribose 1-phosphate degradation; D-glyceraldehyde 3-phosphate and acetaldehyde from 2-deoxy-alpha-D-ribose 1-phosphate: step 1/2. In terms of biological role, isomerase that catalyzes the conversion of deoxy-ribose 1-phosphate (dRib-1-P) and ribose 1-phosphate (Rib-1-P) to deoxy-ribose 5-phosphate (dRib-5-P) and ribose 5-phosphate (Rib-5-P), respectively. This Helicobacter acinonychis (strain Sheeba) protein is Phosphopentomutase.